Consider the following 151-residue polypeptide: UPF0208 membrane protein YfbV (151 aa).

At 1–45 the chain is on the cytoplasmic side; it reads MSTPDNRSVNFFSLFRRGQHYAKTWPMEKRLAPVFVENRVIRMTR. A helical transmembrane segment spans residues 46 to 65; it reads YAIRFMPPVAVFTLCWQIAL. Residues 66–68 lie on the Periplasmic side of the membrane; sequence GGQ. The chain crosses the membrane as a helical span at residues 69–91; it reads LGPAVATALFALSLPMQGLWWLG. Residues 92-151 lie on the Cytoplasmic side of the membrane; that stretch reads KRSLTPLPPSILNWFYEVRGKLQEAGQALAPVEGKPDYQALADTLKRAFKQLDKTFLDDL.

This sequence belongs to the UPF0208 family.

The protein localises to the cell inner membrane. This chain is UPF0208 membrane protein YfbV (yfbV), found in Salmonella typhi.